We begin with the raw amino-acid sequence, 141 residues long: Hemoglobin subunit alpha-A (141 aa).

Residues Val-1–Arg-141 enclose the Globin domain. O2 is bound at residue His-58. His-87 serves as a coordination point for heme b.

Belongs to the globin family. As to quaternary structure, heterotetramer of two alpha chains and two beta chains. In terms of tissue distribution, red blood cells.

In terms of biological role, involved in oxygen transport from the lung to the various peripheral tissues. In Rhea americana (Greater rhea), this protein is Hemoglobin subunit alpha-A (HBAA).